The chain runs to 516 residues: MNMDSIASFSHPFLWTAFAVGVVYCCTRMVSELFLSPLSHIPGPKLAACTRLYEFFYDVICHGRYTFKIAELHEKYGPIVRISPTEIHINDPEFYETLYSTSAPRNKDPWFTTNFDVAESAFSTLDYRLHRPRRALIAPYFAKARVDRIQPLIQGKITKLMRQLDEYARAGKPLKVDVAYNCFTADVITGYTSYRPLGYLDTPDMVPIWSETVRNLVEIGMIARHLPGFFPLLASTGARCIQMVYPKLLSVIAFRVKCIQEVNFMWTHPETATKDAAQAECSEPALFPELVSRASTTPDITEERVLHEFITIVAAGTETTAHTMTVCTFHILNNKDILRRLRAELNDKFPGDATMDLQTLEQLPYLTGIIYEGLRLSYGLSHRLQRISPTDPLKYKDVVIPPNTPVGMSSALIHHDETIFPQSHAFIPDRWTDINERRRLNKYMVAFSKGSRQCIGMNLAFAELYMAVAALFRKYDMELQDTTVDDVKLHSDMMLPHAKKGSKGVRVILKPAQGGE.

A helical membrane pass occupies residues Phe13 to Val30. A heme-binding site is contributed by Cys454.

This sequence belongs to the cytochrome P450 family. Requires heme as cofactor.

Its subcellular location is the membrane. It carries out the reaction 7-methylmellein + 3 reduced [NADPH--hemoprotein reductase] + 3 O2 = 7-carboxymellein + 3 oxidized [NADPH--hemoprotein reductase] + 4 H2O + 4 H(+). It participates in mycotoxin biosynthesis. Cytochrome P450 monooxygenase; part of the gene cluster that mediates the biosynthesis of ochratoxin A (OTA), a mycotoxin composed of a chlorinated type I polyketide dihydroisocoumarin moiety linked to L-phenylalanine, and demonstrated to have nephrotoxic, immunotoxic, genotoxic, neurotoxic, and teratogenic properties. OtaC catalyzes the oxidation of 7-methylmellein (7-MM) into 7-carboxymellein. The pathway begins with the highly reducing polyketide synthase otaA that catalyzes the formation of the isocoumarin group during the initial stages of biosynthesis, starting from one acetate and 4 malonate units, to originate the characteristic pentaketide skeleton 7-methylmellein (7-MM) of the OTA molecule. The newly identified cyclase otaY might be involved in the polyketide cyclization reaction during the initial steps of the OTA biosynthesis. 7-MM is then oxidized into 7-carboxymellein (also called ochratoxin beta) by the cytochrome P450 monooxygenase otaC. The NRPS encoded by the otaB gene is involved in the linking of phenylalanine to the dihydroisocoumarin ring. The reaction catalyzed by NRPS results in the production of ochratoxin B (OTB), which is the non-chlorinated analog of OTA and which subsequently serves as the substrate of the halogenase otaD for chlorination activity to form the final molecular structure of OTA, containing a chlorine atom in the C-5 position of the molecule. This Aspergillus carbonarius (strain ITEM 5010) protein is Cytochrome P450 monooxygenase otaC.